The following is a 388-amino-acid chain: Protein-glutamate methylesterase/protein-glutamine glutaminase 1 (388 aa).

The Response regulatory domain maps to 4–121 (QVLVVDDSSF…ATNKDEAIRL (118 aa)). Asp55 carries the 4-aspartylphosphate modification. A disordered region spans residues 149 to 190 (SARAGLSSTSPTLGSSTLGRSPASGLASSASRNSPTVSTPAS). Residues 153-169 (GLSSTSPTLGSSTLGRS) are compositionally biased toward low complexity. The span at 174 to 189 (LASSASRNSPTVSTPA) shows a compositional bias: polar residues. One can recognise a CheB-type methylesterase domain in the interval 188–388 (PASAIRASGK…EAILKESGRG (201 aa)). Active-site residues include Ser207, His234, and Asp330.

This sequence belongs to the CheB family. In terms of processing, phosphorylated by CheA. Phosphorylation of the N-terminal regulatory domain activates the methylesterase activity.

It localises to the cytoplasm. The enzyme catalyses [protein]-L-glutamate 5-O-methyl ester + H2O = L-glutamyl-[protein] + methanol + H(+). The catalysed reaction is L-glutaminyl-[protein] + H2O = L-glutamyl-[protein] + NH4(+). Functionally, involved in chemotaxis. Part of a chemotaxis signal transduction system that modulates chemotaxis in response to various stimuli. Catalyzes the demethylation of specific methylglutamate residues introduced into the chemoreceptors (methyl-accepting chemotaxis proteins or MCP) by CheR. Also mediates the irreversible deamidation of specific glutamine residues to glutamic acid. The polypeptide is Protein-glutamate methylesterase/protein-glutamine glutaminase 1 (Shewanella denitrificans (strain OS217 / ATCC BAA-1090 / DSM 15013)).